A 302-amino-acid polypeptide reads, in one-letter code: 4-diphosphocytidyl-2-C-methyl-D-erythritol kinase (302 aa).

Lys-13 is a catalytic residue. 101-111 (PVASGIGGGSS) is an ATP binding site. The active site involves Asp-143.

Belongs to the GHMP kinase family. IspE subfamily.

The enzyme catalyses 4-CDP-2-C-methyl-D-erythritol + ATP = 4-CDP-2-C-methyl-D-erythritol 2-phosphate + ADP + H(+). It participates in isoprenoid biosynthesis; isopentenyl diphosphate biosynthesis via DXP pathway; isopentenyl diphosphate from 1-deoxy-D-xylulose 5-phosphate: step 3/6. Its function is as follows. Catalyzes the phosphorylation of the position 2 hydroxy group of 4-diphosphocytidyl-2C-methyl-D-erythritol. This chain is 4-diphosphocytidyl-2-C-methyl-D-erythritol kinase, found in Granulibacter bethesdensis (strain ATCC BAA-1260 / CGDNIH1).